The sequence spans 202 residues: Glycerol-3-phosphate acyltransferase (202 aa).

Helical transmembrane passes span 11-31 (VLIAALVLGYACGAIPFGLIL), 87-107 (PALAAGLGAFLGHLFPVWLGF), 116-136 (FIGVLLALSPVTLAAFAAIWL), and 158-178 (LILWALGHGAVAALFLVLAAL).

This sequence belongs to the PlsY family. Probably interacts with PlsX.

It localises to the cell inner membrane. The catalysed reaction is an acyl phosphate + sn-glycerol 3-phosphate = a 1-acyl-sn-glycero-3-phosphate + phosphate. Its pathway is lipid metabolism; phospholipid metabolism. In terms of biological role, catalyzes the transfer of an acyl group from acyl-phosphate (acyl-PO(4)) to glycerol-3-phosphate (G3P) to form lysophosphatidic acid (LPA). This enzyme utilizes acyl-phosphate as fatty acyl donor, but not acyl-CoA or acyl-ACP. The polypeptide is Glycerol-3-phosphate acyltransferase (Methylorubrum extorquens (strain PA1) (Methylobacterium extorquens)).